The sequence spans 318 residues: Ribose-phosphate pyrophosphokinase (318 aa).

Residues D43–E45 and R102–Q103 each bind ATP. Residues H136 and D176 each contribute to the Mg(2+) site. Residue K199 is part of the active site. D-ribose 5-phosphate is bound by residues R201, D225, and D229 to T233.

This sequence belongs to the ribose-phosphate pyrophosphokinase family. Class I subfamily. As to quaternary structure, homohexamer. Requires Mg(2+) as cofactor.

The protein localises to the cytoplasm. The enzyme catalyses D-ribose 5-phosphate + ATP = 5-phospho-alpha-D-ribose 1-diphosphate + AMP + H(+). It functions in the pathway metabolic intermediate biosynthesis; 5-phospho-alpha-D-ribose 1-diphosphate biosynthesis; 5-phospho-alpha-D-ribose 1-diphosphate from D-ribose 5-phosphate (route I): step 1/1. In terms of biological role, involved in the biosynthesis of the central metabolite phospho-alpha-D-ribosyl-1-pyrophosphate (PRPP) via the transfer of pyrophosphoryl group from ATP to 1-hydroxyl of ribose-5-phosphate (Rib-5-P). This Listeria ivanovii protein is Ribose-phosphate pyrophosphokinase.